The following is a 449-amino-acid chain: MDNNTVITINTSDDTLQTYYSTIAKCPSLTSLINDNTISLNIRTNHMVMILNYFRNINSIQYLYPIANVARKLGIEFNEDGYVYINIGGKIFYVEKKLMSNKLGYFEAFFRNYNQLDPDYSSILIDRCPNLFAKIMSFLTMSNQELSGTTRLELQYYCYNLRNYFIKLEHFKYMDYLLDHYCSHNYRLVTDMNISDNTVKTTLENSQNIYAIFFKNRIDIKTLKDNISIKINNIESNTNLLILSNELVFDDNFIFIKLESDKKLPCDIEITFPDTTIISGDSCFFKTKFRCDKHNGIIRDTSSHNVTSKNGNIYTVDVDIDQNKITIPVKNLITNIFNEQEVDKFSDVLVSDIIFVTDKFSLKGAYVELSCNTINESINCSENSQIIAKCSLKKSFGSKQKYRINFPFTTKYIKNVLPHYSGNYEIVINLENKYEGPLYLKYRTIAIHK.

In terms of domain architecture, BTB spans 79–148 (EDGYVYINIG…LTMSNQELSG (70 aa)).

Belongs to the mimivirus BTB/WD family.

The protein is Putative BTB/POZ domain-containing protein L742 of Acanthamoeba polyphaga mimivirus (APMV).